The following is a 576-amino-acid chain: TOX high mobility group box family member 3 (576 aa).

3 disordered regions span residues 189 to 258 (NLGG…PQKP), 422 to 443 (TMVGSAPSTQVSPSVQTQQHQM), and 519 to 563 (LQHM…QIQS). Positions 204-215 (ASKSATPSPSSS) are enriched in low complexity. Positions 223–239 (EANRAIGEKRAAPDSGK) are enriched in basic and acidic residues. A compositionally biased stretch (basic residues) spans 240 to 250 (KPKTPKKKKKK). Residues 255 to 323 (PQKPVSAYAL…EYLKALAAYR (69 aa)) constitute a DNA-binding region (HMG box). Residues 428–443 (PSTQVSPSVQTQQHQM) are compositionally biased toward low complexity. A compositionally biased stretch (polar residues) spans 528-542 (PSPRQHSPVASQITS). The segment covering 549 to 563 (SPQPASQQHQSQIQS) has biased composition (low complexity).

As to quaternary structure, homodimer. Interacts with CREB1; the interaction is not depolarization dependent. Interacts with CREBBP (via C-terminus). Interacts (via HGM box) with CITED1 (via C-terminus); the interaction increases estrogen-response element (ERE)-dependent transcription and protection against cell death. Interacts with CREB1 (phosphorylated form). Expressed mainly in epithelial cells. Expressed in the central nervous system (CNS), in the ileum and within the brain in the frontal and occipital lobe.

It is found in the nucleus. Transcriptional coactivator of the p300/CBP-mediated transcription complex. Activates transactivation through cAMP response element (CRE) sites. Protects against cell death by inducing antiapoptotic and repressing pro-apoptotic transcripts. Stimulates transcription from the estrogen-responsive or BCL-2 promoters. Required for depolarization-induced transcription activation of the C-FOS promoter in neurons. Associates with chromatin to the estrogen-responsive C3 promoter region. The protein is TOX high mobility group box family member 3 (TOX3) of Homo sapiens (Human).